Consider the following 3303-residue polypeptide: MVTNAAGTAATGGATSNTTNNNNLQTNNNSHGANNNNDDFDFDQDSGLQDLGLPVSVQTFLWRQIAPFIRPKLGKLHESTCLFCQHAPGHHESKEACKSFEKVLVQNIQFGLSPPLTKGLGVIPRWRLLQGALPHVMHACAALLYNRVKDMQAIGPVETKLLYTMQWILLYAAEECADDEGGEDLGLGDAAEPKSKSIDQYLFSVPTITLFVYLFAPIIHHLKESDFQNFRLENGIKLWQGMWDNRAPGAPCFTAPVKPKARNLLCAPTPKGSTDVFPARKHSLSADAMSPKADSPQSGISDYGRQDEEGSWVSSPKEFAFPETIPEEASSVEDERVVIFRLPSAPQLMDNSFFTADASLLQQQQSQSRRGSRQSMNSRDKDKVPSTKFEFDQQELMRGASMKEKRSASIEKETDSDKSESIKADVSAATFLDVAVLRCLFISHWQEEGIFWSLQYLYNRLSDIGEEAAITLNQPRKRSNSLPIPQIEISLYQGPGSNSRDSPGSSVVKDYIEIPDPSPTVTACVAEEPQSAPSTTERRGSEKKKRVKMADLRAFVETKMFSKSEKNLEKVGLDTNSANGKTPLQHAEYHRSLDTGEKKLSRSASMISREPASNLIKGKSMPSLRFYRYVEPPKAPRPSQATCPRSTAFYPRNPIITVTEHTPTPSPDYMKRQGSIDSQLDALSNGGSIAGMTGNGGGNGSTGMGSSTTRYRGQMLRSHTDSHIDYTGVDESEAPGSSFYITRDGGIDYEIILLAISNVFKRDPAQVCSLRVLEAGLNICELLIEMGVLKLGEHAHEISMSITRRALQVLGCPHGCNDGVRGPPADFLRNQCQKILSRMLRQAGQRTKRFMQEMVKTSPLPELIDYFHAFLAFCVDPSSLLSPLSQGGYSTNFSGGMSGGAEAQVVGAVFKPLVSRFVEASKDLKGPENIALYGDIRQLVTYVKGAHGGPFRLVALSGILAVTPRPHKKGPSAQTTRVIRHIPQANANQSLQNDDNRSQRRLLLKKRSTSSACASLLETEACEEHYKTSQSPLSNFRRRTTGVRPTLTPRHSERALLSDSTSSSERNSLGRLSGLVRWFRGTPKEASSIDLEIGSLNPEISSTFMRHASLKIQRGRSSDGIGRSIQRAKRRVERRLNRFGGIVKGKKKVGGIEETADFSRRSSSDMCDGPRESEVVILKERKLVPTEPVRVGMLRLSFLLETCAPGSFPDPQLVAAVLDLPQAPLVARATFLLECAHFVHLCNKGQWPAWMKQNVGSYRASGANINLNQMKQQVSQTSARRTHILQRAAGKMFHQWAEMVGARLEEILFTERLQYEAVNASLTDPEKQRELLQQDEEEDFLDETSVNPHGNDCPHSLKLIACVLLFEITAFLRDTYLMLPKTSKLIHRDKPAPWEKVYREANRRWSMALSSMGHSQTSAQSLQSIAAGNDGAGQSERKISFVLHEPDNESENSSNTTLTKEGEEARRPTTSAVRPFLLRRGTATTTGGSFKRRSLKLRRNTKDSKDIETDFNMQSRRKVSSLSDRSDTSEQGMISGGEESPGILSDDQQPESPTDSNENDDTAKNMPWLKAIIDLMSSYNYYCTHKGYCHPFCYKRHMRSCTRLVKATRKVYGEEFGFTFDADHPNVEPTIITSSKPHTSRARSTRKVSEQSSTQTSPSKRKDSLSRKDRISDDPDLEMAEKLAKAFRQEKEKKMQEEPPILKFIRIHIRNLFHFPLATLLKGAVVLTEEMVIEAMPAAWELLLETNHDTATSSAAVFLMGSVKAQNFAFDIMQRALKHKDPDIRIGAIQRYLVLWKCRFHVWPRMEENAHDVTFKVPPGGIEFTLPSPKIGIESLPVVDPPWMPVQQTKDMDVTLNQDRHRSLVTATKSRKMQQTEAIRNALRQQRDKQRAERHSFLITMIPISQQASHEPGMEKLEDHEIEEDLDGTRMSSHLHHAHSLFPSVLCSSVMQIVGCLDDAAIGSDGNAVYEIAYQVIWVCLVEESALFLRYVFERLTRDRQDQMFKLLRHLIRFVPRLPQQAAFALYNSIIGYIMFYVRSSNELKQELVGSALSVLWMVVHSVHGIMFKDLKQILRKEQCDASILLTANVPAAKKIVVHGPADDDYNIPSQFPVQEDTLFCQLLKEALDYYPIDEKNTSHYCLVDYKSSKILNPNWYIRDLYFFKRSQYPEVRLMLMRPEESFLALQKQELTKKFVEIGKVHLTWAILKNVDMVVQRVVFLHEELMKLPSFPRKALEVDLDLHHGGEYGKVLLGLDVLHKFMWVRLIARMFEAMAGNFAYSADIQLFLNVLSGASILHAEDSCIMRYVMATFINAAFNFKNIFSTNGYFMIMPTLLQVYSLHQTNKLITTTIEYAVKQFYLLNRKPFILQMFGSVSAILDTDEDGTYGEAHKVQSSCLFNLLLSLEDPSPDPLNIAELVKEPKPLKAIDFCYHDEDDDVTVLDCITLCVMVVSYSAESTRGYQMLIILEAILPCYLQQIQSPSYIPLQGKSERDIILQLAVAIRTMVHNCEGLAKSYNGPYRNSPEHKGSSQRNCSRGPPCSPGLDFEEETHPKYMTDARTKNMMDSAEDSEMIRTEYRRPRDVLLSVVADFLTKSTVRLAELAKKMPSDTKPTEVLDAKCHIRLADIAHSLLKVSPYDPESMACRGLQRYMQAVLPRAEWSNDTLRNALVTILRRIDKVFLKISKKPSIRRNTDWEAAAGLLKGIHETIIRHSYVLHWQQMKTLISTVQNLIVNEPGIPEGVSSAGAALMSQNPPAFFCSAVVRLVALQVVSPVDCFSLVQICGGSSEFATQEKAEGFLMHLIMPLCLKVCSGRGVSDVGELKMSDVSFLLTAVLNAMSPPAGRTGQAVSQINRVTGDLRAGSLTFTGSRDAKRPARISGSLYQAAFLALRIVCICFESRLSNEWPRIVRVMRDLGRRNEAAPDLWSFMEFVVTHRTPLYIVLLPFILHKISQPPIGDHERHMQFIIRERLRGTPPQGGIKSKGALLLELARELRDLRDELEEKRYDRESSEQKKSDTPAATSAAEAHKSQQRPSLISIFTGTTTGQASHSHVSAVPIDSRSGSGGICTPSDTLSQQTLHPPRESLSSSSTGRDPHTTTSESQSGEADAGSAPTLVGATPSGSGHGSGGGIGTGAASAVPSHLSHSQSLQQAPFKAQPPKLRFVSSVEFRHSSGETSTTPLSPESPAEDSSGDHTRSRLQRSKAASRKTFRLKRSRLTPMEPPSIVTSQEEQAPQAQAKTLGEISWDSVSQTSSTSGYRDNNSLQTGLLSPDGSLGGLTLGRSPSQHSLLMVFEGQDEDTLI.

Positions 1 to 37 (MVTNAAGTAATGGATSNTTNNNNLQTNNNSHGANNNN) are enriched in low complexity. The disordered stretch occupies residues 1–43 (MVTNAAGTAATGGATSNTTNNNNLQTNNNSHGANNNNDDFDFD). Residues 202-222 (LFSVPTITLFVYLFAPIIHHL) traverse the membrane as a helical segment. Disordered stretches follow at residues 284 to 316 (LSAD…VSSP), 361 to 422 (LQQQ…SESI), 491 to 512 (LYQG…KDYI), 526 to 546 (AEEP…KKKR), 1036 to 1067 (FRRR…SERN), 1443 to 1563 (LHEP…DDTA), and 1627 to 1671 (VEPT…KDRI). Residues 361–377 (LQQQQSQSRRGSRQSMN) show a composition bias toward low complexity. 2 stretches are compositionally biased toward basic and acidic residues: residues 378-391 (SRDK…KFEF) and 401-422 (SMKE…SESI). Residues 495 to 505 (PGSNSRDSPGS) are compositionally biased toward polar residues. The segment covering 1058–1067 (SDSTSSSERN) has biased composition (polar residues). Residues 1490 to 1499 (FKRRSLKLRR) are compositionally biased toward basic residues. Residues 1546–1556 (DDQQPESPTDS) are compositionally biased toward polar residues. Residues 1660–1671 (KRKDSLSRKDRI) are compositionally biased toward basic and acidic residues. 3 helical membrane passes run 1969 to 1989 (VYEI…ALFL), 2018 to 2038 (LPQQ…MFYV), and 2048 to 2068 (LVGS…GIMF). Disordered regions lie at residues 2518 to 2550 (NGPY…FEEE), 3003 to 3158 (EEKR…FKAQ), and 3170 to 3262 (FRHS…YRDN). A compositionally biased stretch (basic and acidic residues) spans 3003–3018 (EEKRYDRESSEQKKSD). Polar residues-rich tracts occupy residues 3033–3053 (QRPS…SHSH) and 3071–3106 (PSDT…SQSG). A compositionally biased stretch (gly residues) spans 3124-3134 (SGHGSGGGIGT). The span at 3135–3152 (GAASAVPSHLSHSQSLQQ) shows a compositional bias: low complexity. Residues 3198–3217 (SRLQRSKAASRKTFRLKRSR) are compositionally biased toward basic residues. The span at 3226 to 3239 (IVTSQEEQAPQAQA) shows a compositional bias: polar residues. A compositionally biased stretch (low complexity) spans 3246 to 3257 (SWDSVSQTSSTS).

This sequence belongs to the unc-80 family. As to quaternary structure, interacts with unc79 and na. Can interact with unc79 independently of na.

It is found in the membrane. Component of the na (narrow abdomen) sodium channel complex. In the circadian clock neurons it functions with na and unc79 to promote circadian rhythmicity. The sequence is that of Protein unc-80 homolog from Drosophila melanogaster (Fruit fly).